A 92-amino-acid chain; its full sequence is Beta-2-microglobulin (92 aa).

Positions 2 to 89 constitute an Ig-like C1-type domain; the sequence is PQIQVYSRHP…NHVSMDKPMT (88 aa). A disulfide bridge links Cys22 with Cys77.

This sequence belongs to the beta-2-microglobulin family. Heterodimer of an alpha chain and a beta chain. Beta-2-microglobulin is the beta-chain of major histocompatibility complex class I molecules.

It is found in the secreted. Its function is as follows. Component of the class I major histocompatibility complex (MHC). Involved in the presentation of peptide antigens to the immune system. The protein is Beta-2-microglobulin (B2m) of Mus spretus (Western Mediterranean mouse).